The chain runs to 195 residues: Imidazoleglycerol-phosphate dehydratase (195 aa).

It belongs to the imidazoleglycerol-phosphate dehydratase family.

It is found in the cytoplasm. The enzyme catalyses D-erythro-1-(imidazol-4-yl)glycerol 3-phosphate = 3-(imidazol-4-yl)-2-oxopropyl phosphate + H2O. The protein operates within amino-acid biosynthesis; L-histidine biosynthesis; L-histidine from 5-phospho-alpha-D-ribose 1-diphosphate: step 6/9. This Burkholderia cenocepacia (strain HI2424) protein is Imidazoleglycerol-phosphate dehydratase.